A 467-amino-acid chain; its full sequence is Rhamnulokinase (467 aa).

Residue 11-15 participates in ATP binding; the sequence is ASSGR. Residues A78 and 235–237 each bind substrate; that span reads HDT. Residue D236 is the Proton acceptor of the active site. T257 is an ATP binding site. N294 serves as a coordination point for substrate. Residue Q302 coordinates ATP. Residues C351 and C368 are joined by a disulfide bond. Residue G400 coordinates ATP.

It belongs to the rhamnulokinase family. It depends on Mg(2+) as a cofactor.

The enzyme catalyses L-rhamnulose + ATP = L-rhamnulose 1-phosphate + ADP + H(+). Its pathway is carbohydrate degradation; L-rhamnose degradation; glycerone phosphate from L-rhamnose: step 2/3. In terms of biological role, involved in the catabolism of L-rhamnose (6-deoxy-L-mannose). Catalyzes the transfer of the gamma-phosphate group from ATP to the 1-hydroxyl group of L-rhamnulose to yield L-rhamnulose 1-phosphate. This Halalkalibacterium halodurans (strain ATCC BAA-125 / DSM 18197 / FERM 7344 / JCM 9153 / C-125) (Bacillus halodurans) protein is Rhamnulokinase.